A 271-amino-acid chain; its full sequence is MHRLLRGGHLQSFHEYIERWQKQHGKRLDHDERVRKRQARESHKQSQDAQNLRGLRAKLYQQKRHAEKIQMRKRIKAQEEKNVKSSAPDEPSKTPLPQYLLDRSQATNAKALSSAIKDKRAEKAAKFAVPLPKVKGISEEEMFKVVNTGKKTHKKSWKRMITKPTFVGSDFTRRPVKYERFIRPMGLRYKKANVTHPELGVTVQLPILGVKKNPQNPLYTQLGVLTKGTIIEVNVSELGLVTTSGKVVWGKYAQITNTPENDGTVNAVLLV.

Residues 22–46 show a composition bias toward basic and acidic residues; sequence KQHGKRLDHDERVRKRQARESHKQS. The interval 22-97 is disordered; sequence KQHGKRLDHD…PDEPSKTPLP (76 aa). Short sequence motifs (nuclear localization signal) lie at residues 25–32 and 62–69; these read GKRLDHDE and QKRHAEKI. A compositionally biased stretch (basic residues) spans 61 to 75; sequence QQKRHAEKIQMRKRI.

It belongs to the eukaryotic ribosomal protein eS8 family. Ribosome biogenesis protein NSA2 subfamily. In terms of assembly, component of the pre-66S ribosomal particle. Interacts with nop7 and rrp1. Interacts with rsa4 (via WD repeats).

It localises to the nucleus. It is found in the nucleolus. Involved in the biogenesis of the 60S ribosomal subunit. May play a part in the quality control of pre-60S particles. This Neosartorya fischeri (strain ATCC 1020 / DSM 3700 / CBS 544.65 / FGSC A1164 / JCM 1740 / NRRL 181 / WB 181) (Aspergillus fischerianus) protein is Ribosome biogenesis protein nsa2 (nsa2).